The primary structure comprises 695 residues: Glycine--tRNA ligase beta subunit (695 aa).

It belongs to the class-II aminoacyl-tRNA synthetase family. In terms of assembly, tetramer of two alpha and two beta subunits.

It is found in the cytoplasm. It catalyses the reaction tRNA(Gly) + glycine + ATP = glycyl-tRNA(Gly) + AMP + diphosphate. This chain is Glycine--tRNA ligase beta subunit, found in Desulforamulus reducens (strain ATCC BAA-1160 / DSM 100696 / MI-1) (Desulfotomaculum reducens).